A 125-amino-acid chain; its full sequence is Small ribosomal subunit protein uS13 (125 aa).

The interval 92 to 125 (RRHLPVHGQRTKTNARTRKGPKKTVAGKKKAGKK) is disordered.

Belongs to the universal ribosomal protein uS13 family. Part of the 30S ribosomal subunit. Forms a loose heterodimer with protein S19. Forms two bridges to the 50S subunit in the 70S ribosome.

In terms of biological role, located at the top of the head of the 30S subunit, it contacts several helices of the 16S rRNA. In the 70S ribosome it contacts the 23S rRNA (bridge B1a) and protein L5 of the 50S subunit (bridge B1b), connecting the 2 subunits; these bridges are implicated in subunit movement. Contacts the tRNAs in the A and P-sites. In Saccharopolyspora erythraea (strain ATCC 11635 / DSM 40517 / JCM 4748 / NBRC 13426 / NCIMB 8594 / NRRL 2338), this protein is Small ribosomal subunit protein uS13.